A 308-amino-acid polypeptide reads, in one-letter code: 26S proteasome non-ATPase regulatory subunit 14 homolog (308 aa).

In terms of domain architecture, MPN spans valine 30–glutamine 165. Zn(2+)-binding residues include histidine 112, histidine 114, and aspartate 125. The JAMM motif motif lies at histidine 112–aspartate 125. Residue lysine 238 forms a Glycyl lysine isopeptide (Lys-Gly) (interchain with G-Cter in ubiquitin) linkage.

It belongs to the peptidase M67A family. PSMD14 subfamily. As to quaternary structure, component of the 19S regulatory particle (RP/PA700) lid subcomplex of the 26S proteasome. The 26S proteasome is composed of a core protease (CP), known as the 20S proteasome, capped at one or both ends by the 19S regulatory particle (RP/PA700). The RP/PA700 complex is composed of at least 17 different subunits in two subcomplexes, the base and the lid, which form the portions proximal and distal to the 20S proteolytic core, respectively. Ubiquitous with highest expression in flowers.

Its function is as follows. Metalloprotease component of the 26S proteasome that specifically cleaves 'Lys-63'-linked polyubiquitin chains. The 26S proteasome is involved in the ATP-dependent degradation of ubiquitinated proteins. The function of the 'Lys-63'-specific deubiquitination of the proteasome is unclear. This is 26S proteasome non-ATPase regulatory subunit 14 homolog (RPN11) from Arabidopsis thaliana (Mouse-ear cress).